Here is a 239-residue protein sequence, read N- to C-terminus: 1-(5-phosphoribosyl)-5-[(5-phosphoribosylamino)methylideneamino] imidazole-4-carboxamide isomerase (239 aa).

Residue Asp-8 is the Proton acceptor of the active site. Asp-129 acts as the Proton donor in catalysis.

It belongs to the HisA/HisF family.

It is found in the cytoplasm. The catalysed reaction is 1-(5-phospho-beta-D-ribosyl)-5-[(5-phospho-beta-D-ribosylamino)methylideneamino]imidazole-4-carboxamide = 5-[(5-phospho-1-deoxy-D-ribulos-1-ylimino)methylamino]-1-(5-phospho-beta-D-ribosyl)imidazole-4-carboxamide. It functions in the pathway amino-acid biosynthesis; L-histidine biosynthesis; L-histidine from 5-phospho-alpha-D-ribose 1-diphosphate: step 4/9. The protein is 1-(5-phosphoribosyl)-5-[(5-phosphoribosylamino)methylideneamino] imidazole-4-carboxamide isomerase of Bacillus cereus (strain G9842).